A 214-amino-acid chain; its full sequence is ATP-dependent Clp protease proteolytic subunit (214 aa).

Ser-113 functions as the Nucleophile in the catalytic mechanism. The active site involves His-138.

It belongs to the peptidase S14 family. Fourteen ClpP subunits assemble into 2 heptameric rings which stack back to back to give a disk-like structure with a central cavity, resembling the structure of eukaryotic proteasomes.

It localises to the cytoplasm. The enzyme catalyses Hydrolysis of proteins to small peptides in the presence of ATP and magnesium. alpha-casein is the usual test substrate. In the absence of ATP, only oligopeptides shorter than five residues are hydrolyzed (such as succinyl-Leu-Tyr-|-NHMec, and Leu-Tyr-Leu-|-Tyr-Trp, in which cleavage of the -Tyr-|-Leu- and -Tyr-|-Trp bonds also occurs).. Its function is as follows. Cleaves peptides in various proteins in a process that requires ATP hydrolysis. Has a chymotrypsin-like activity. Plays a major role in the degradation of misfolded proteins. This Teredinibacter turnerae (strain ATCC 39867 / T7901) protein is ATP-dependent Clp protease proteolytic subunit.